The chain runs to 415 residues: Esterase FrsA (415 aa).

It belongs to the FrsA family.

It catalyses the reaction a carboxylic ester + H2O = an alcohol + a carboxylate + H(+). Functionally, catalyzes the hydrolysis of esters. This chain is Esterase FrsA, found in Vibrio parahaemolyticus serotype O3:K6 (strain RIMD 2210633).